The primary structure comprises 1239 residues: Structural polyprotein (1239 aa).

Residues 1-35 (MFPYPTLNYPPMAPINPMAYRDPNPPRQVAPFRPP) are necessary for nucleocapsid assembly and virus assembly. The disordered stretch occupies residues 1 to 101 (MFPYPTLNYP…RKPKPGKRQR (101 aa)). A compositionally biased stretch (pro residues) spans 23 to 34 (PNPPRQVAPFRP). The segment at 36-69 (LAAQIEDLRRSIANLTLKQRAPNPPAGPPAKRKK) is host transcription inhibition. Residues 43 to 50 (LRRSIANL) carry the Supraphysiological nuclear export signal motif. A glycan (N-linked (GlcNAc...) asparagine; by host) is linked at Asn-49. The Nuclear localization signal signature appears at 66-69 (KRKK). Positions 79–101 (KKKRPPPPAKKQKRKPKPGKRQR) are enriched in basic residues. The binding to the viral RNA stretch occupies residues 81 to 111 (KRPPPPAKKQKRKPKPGKRQRMCMKLESDKT). Residues 96 to 110 (PGKRQRMCMKLESDK) form a ribosome-binding region. Ser-108 is subject to Phosphoserine. One can recognise a Peptidase S3 domain in the interval 110 to 259 (KTFPIMLNGQ…KDTPEGSEPW (150 aa)). Thr-111 carries the phosphothreonine modification. Catalysis depends on His-136, which acts as the Charge relay system. An interaction with spike glycoprotein E2 region spans residues 152–157 (KKASIY). Catalysis depends on charge relay system residues Asp-158 and Ser-210. The interaction with spike glycoprotein E2 stretch occupies residues 244–248 (QKGVT). Positions 260-271 (SLATVMCVLANI) are functions as an uncleaved signal peptide for the precursor of protein E3/E2. Topologically, residues 260–681 (SLATVMCVLA…HVVVVYYYNR (422 aa)) are extracellular. 9 disulfide bridges follow: Cys-266-Cys-275, Cys-280-Cys-284, Cys-283-Cys-315, Cys-341-Cys-444, Cys-344-Cys-349, Cys-411-Cys-425, Cys-472-Cys-585, Cys-521-Cys-545, and Cys-523-Cys-539. N-linked (GlcNAc...) asparagine; by host glycosylation occurs at Asn-270. The N-linked (GlcNAc...) asparagine; by host glycan is linked to Asn-637. Residues 682 to 702 (YPLTTIIGLCTCVAIIMVSCD) form a helical membrane-spanning segment. The Cytoplasmic portion of the chain corresponds to 703–742 (HPCGSFSGLRNLCITPYKLAPNAQVPILLALLCCIKPTRA). Cys-705 carries S-palmitoyl cysteine; by host lipidation. The interaction with the capsid protein stretch occupies residues 710–714 (GLRNL). Positions 714–734 (LCITPYKLAPNAQVPILLALL) are transient transmembrane before p62-6K protein processing. S-palmitoyl cysteine; by host attachment occurs at residues Cys-715, Cys-735, and Cys-736. Cys-715 and Cys-736 are oxidised to a cystine. Residues 743–754 (DDTLQVLNYLWN) are Extracellular-facing. Residues 755–775 (NNQNFFWMQTLIPLAALIVCM) form a helical membrane-spanning segment. Position 776 (Arg-776) is a topological domain, cytoplasmic. The chain crosses the membrane as a helical span at residues 777–797 (MLAALFCCGPAFLLVCGAWAA). At 798–1215 (AYEHTAVMPN…WSWLKVLVGG (418 aa)) the chain is on the extracellular side. Cystine bridges form between Cys-847/Cys-912, Cys-860/Cys-892, Cys-861/Cys-894, and Cys-866/Cys-876. Residues 882–899 (VYPFMWGGAYCFCDTENT) are E1 fusion peptide loop. 2 N-linked (GlcNAc...) asparagine; by host glycosylation sites follow: Asn-932 and Asn-1069. Disulfide bonds link Cys-1058/Cys-1070, Cys-1100/Cys-1175, and Cys-1105/Cys-1179. The helical transmembrane segment at 1216–1236 (TSAFIVLGLIATAVVALVLFF) threads the bilayer. The Cytoplasmic portion of the chain corresponds to 1237 to 1239 (HRH).

In terms of assembly, homodimer. Homomultimer. Interacts with host karyopherin KPNA4; this interaction allows the nuclear import of the viral capsid protein. Interacts with spike glycoprotein E2. Interacts with host IRAK1; the interaction leads to inhibition of IRAK1-dependent signaling. Part of a tetrameric complex composed of host CRM1, host importin alpha/beta dimer and the viral capsid; this complex blocks the receptor-mediated transport through the nuclear pore. Interacts with host phosphatase PPP1CA; this interaction dephosphorylates the capsid protein, which increases its ability to bind to the viral genome. As to quaternary structure, the precursor of protein E3/E2 and E1 form a heterodimer shortly after synthesis. The precursor of protein E3/E2 and E1 form a heterodimer shortly after synthesis. Processing of the precursor of protein E3/E2 into E2 and E3 results in a heterodimer of the spike glycoproteins E2 and E1. Spike at virion surface are constituted of three E2-E1 heterodimers. After target cell attachment and endocytosis, E1 change conformation to form homotrimers. E2-E1 heterodimers interact with host VLDLR or LRP8/APOER2 to mediate viral entry. Interacts with 6K protein. In terms of assembly, interacts with spike glycoprotein E1. Processing of the precursor of protein E3/E2 into E2 and E3 results in a heterodimer of the spike glycoproteins E2 and E1. Spike at virion surface are constituted of a trimer of E2-E1 heterodimers. Interacts with 6K protein. E2-E1 heterodimers interact with host VLDLR or LRP8/APOER2 to mediate viral entry. Interacts (via E2-A) with host VLDLR (via class A repeats); this interaction mediates viral entry into host cell. Interacts with host LRP8/APOER2 (via class A repeats); this interaction mediates viral entry into host cell. As to quaternary structure, oligomer. Interacts with spike glycoprotein E1. Interacts with spike glycoprotein E2. Structural polyprotein: Specific enzymatic cleavages in vivo yield mature proteins. Capsid protein is auto-cleaved during polyprotein translation, unmasking a signal peptide at the N-terminus of the precursor of E3/E2. The remaining polyprotein is then targeted to the host endoplasmic reticulum, where host signal peptidase cleaves it into pE2, 6K and E1 proteins. pE2 is further processed to mature E3 and E2 by host furin in trans-Golgi vesicle. In terms of processing, phosphorylated on serine and threonine residues. Post-translationally, palmitoylated via thioester bonds. These palmitoylations may induce disruption of the C-terminus transmembrane. This would result in the reorientation of E2 C-terminus from lumenal to cytoplasmic side. N-glycosylated. In terms of processing, palmitoylated via thioester bonds.

The protein resides in the virion. Its subcellular location is the host cytoplasm. It is found in the host cell membrane. The protein localises to the host nucleus. It localises to the virion membrane. The protein resides in the host Golgi apparatus. Its subcellular location is the host trans-Golgi network. It is found in the host endoplasmic reticulum. It carries out the reaction Autocatalytic release of the core protein from the N-terminus of the togavirus structural polyprotein by hydrolysis of a -Trp-|-Ser- bond.. Forms an icosahedral capsid with a T=4 symmetry composed of 240 copies of the capsid protein surrounded by a lipid membrane through which penetrate 80 spikes composed of trimers of E1-E2 heterodimers. The capsid protein binds to the viral RNA genome at a site adjacent to a ribosome binding site for viral genome translation following genome release. Possesses a protease activity that results in its autocatalytic cleavage from the nascent structural protein. Following its self-cleavage, the capsid protein transiently associates with ribosomes, and within several minutes the protein binds to viral RNA and rapidly assembles into icosahedric core particles. The resulting nucleocapsid eventually associates with the cytoplasmic domain of the spike glycoprotein E2 at the cell membrane, leading to budding and formation of mature virions. In case of infection, new virions attach to target cells and after clathrin-mediated endocytosis their membrane fuses with the host endosomal membrane. This leads to the release of the nucleocapsid into the cytoplasm, followed by an uncoating event necessary for the genomic RNA to become accessible. The uncoating might be triggered by the interaction of capsid proteins with ribosomes. Binding of ribosomes would release the genomic RNA since the same region is genomic RNA-binding and ribosome-binding. Specifically inhibits interleukin-1 receptor-associated kinase 1/IRAK1-dependent signaling during viral entry, representing a means by which the alphaviruses may evade innate immune detection and activation prior to viral gene expression. Inhibits host transcription. Forms a tetrameric complex with XPO1/CRM1 and the nuclear import receptor importin. This complex blocks the central channel of host nuclear pores thereby inhibiting the receptor-mediated nuclear transport and thus the host mRNA and rRNA transcription. The inhibition of transcription is linked to a cytopathic effect on the host cell. In terms of biological role, provides the signal sequence for the translocation of the precursor of protein E3/E2 to the host endoplasmic reticulum. Furin-cleaved E3 remains associated with spike glycoprotein E1 and mediates pH protection of the latter during the transport via the secretory pathway. After virion release from the host cell, the assembly protein E3 is gradually released in the extracellular space. Its function is as follows. Plays a role in viral attachment to target host cell, by binding to the cell receptors VLDLR or LRP8/APOER2. Synthesized as a p62 precursor which is processed by furin at the cell membrane just before virion budding, giving rise to E2-E1 heterodimer. The p62-E1 heterodimer is stable, whereas E2-E1 is unstable and dissociate at low pH. p62 is processed at the last step, presumably to avoid E1 fusion activation before its final export to cell surface. E2 C-terminus contains a transitory transmembrane that would be disrupted by palmitoylation, resulting in reorientation of the C-terminal tail from lumenal to cytoplasmic side. This step is critical since E2 C-terminus is involved in budding by interacting with capsid proteins. This release of E2 C-terminus in cytoplasm occurs lately in protein export, and precludes premature assembly of particles at the endoplasmic reticulum membrane. Functionally, acts as a viroporin that participates in virus glycoprotein processing and transport to the plasma membrane, cell permeabilization and budding of viral particles. Disrupts the calcium homeostasis of the cell, probably at the endoplasmic reticulum level. This leads to cytoplasmic calcium elevation. Because of its lipophilic properties, the 6K protein is postulated to influence the selection of lipids that interact with the transmembrane domains of the glycoproteins, which, in turn, affects the deformability of the bilayer required for the extreme curvature that occurs as budding proceeds. Present in low amount in virions, about 3% compared to viral glycoproteins. Class II viral fusion protein. Fusion activity is inactive as long as E1 is bound to E2 in mature virion. After virus attachment to target cell via host VLDLR or LRP8/APOER2 and endocytosis, acidification of the endosome induces dissociation of E1/E2 heterodimer and concomitant trimerization of the E1 subunits. This E1 trimer is fusion active, and promotes release of viral nucleocapsid in cytoplasm after endosome and viral membrane fusion. Efficient fusion requires the presence of cholesterol and sphingolipid in the target membrane. This is Structural polyprotein from Aedes (Human).